The primary structure comprises 74 residues: Small ribosomal subunit protein bS18 (74 aa).

It belongs to the bacterial ribosomal protein bS18 family. Part of the 30S ribosomal subunit. Forms a tight heterodimer with protein bS6.

Functionally, binds as a heterodimer with protein bS6 to the central domain of the 16S rRNA, where it helps stabilize the platform of the 30S subunit. This is Small ribosomal subunit protein bS18 from Rhizorhabdus wittichii (strain DSM 6014 / CCUG 31198 / JCM 15750 / NBRC 105917 / EY 4224 / RW1) (Sphingomonas wittichii).